A 559-amino-acid polypeptide reads, in one-letter code: Probable D-2-hydroxyglutarate dehydrogenase, mitochondrial (559 aa).

The N-terminal 80 residues, 1 to 80 (MARRAAAGLL…MNFEVQKRSF (80 aa)), are a transit peptide targeting the mitochondrion. Residues 131 to 310 (YKGSSQLLLL…TKIAILTPAK (180 aa)) form the FAD-binding PCMH-type domain.

The protein belongs to the FAD-binding oxidoreductase/transferase type 4 family. In terms of assembly, homodimer. Requires FAD as cofactor.

It is found in the mitochondrion. The catalysed reaction is (R)-2-hydroxyglutarate + A = 2-oxoglutarate + AH2. Catalyzes the oxidation of D-2-hydroxyglutarate to alpha-ketoglutarate. This chain is Probable D-2-hydroxyglutarate dehydrogenase, mitochondrial (D2HGDH), found in Oryza sativa subsp. japonica (Rice).